A 332-amino-acid chain; its full sequence is Ornithine carbamoyltransferase 1, catabolic (332 aa).

Residues 56-59 (STRT), Gln83, Arg107, and 134-137 (HPTQ) each bind carbamoyl phosphate. L-ornithine is bound by residues Asn167, Asp231, and 235-236 (SM). Carbamoyl phosphate-binding positions include 273 to 274 (CL) and Arg318.

Belongs to the aspartate/ornithine carbamoyltransferase superfamily. OTCase family.

It localises to the cytoplasm. It catalyses the reaction carbamoyl phosphate + L-ornithine = L-citrulline + phosphate + H(+). It functions in the pathway amino-acid degradation; L-arginine degradation via ADI pathway; carbamoyl phosphate from L-arginine: step 2/2. In terms of biological role, reversibly catalyzes the transfer of the carbamoyl group from carbamoyl phosphate (CP) to the N(epsilon) atom of ornithine (ORN) to produce L-citrulline. This Staphylococcus epidermidis (strain ATCC 12228 / FDA PCI 1200) protein is Ornithine carbamoyltransferase 1, catabolic (arcB1).